A 294-amino-acid polypeptide reads, in one-letter code: tRNA dimethylallyltransferase (294 aa).

10-17 (GPTAVGKT) is an ATP binding site. Substrate is bound at residue 12–17 (TAVGKT). The tract at residues 35–38 (DSQQ) is interaction with substrate tRNA.

This sequence belongs to the IPP transferase family. As to quaternary structure, monomer. It depends on Mg(2+) as a cofactor.

It carries out the reaction adenosine(37) in tRNA + dimethylallyl diphosphate = N(6)-dimethylallyladenosine(37) in tRNA + diphosphate. Its function is as follows. Catalyzes the transfer of a dimethylallyl group onto the adenine at position 37 in tRNAs that read codons beginning with uridine, leading to the formation of N6-(dimethylallyl)adenosine (i(6)A). The sequence is that of tRNA dimethylallyltransferase from Streptococcus suis (strain 98HAH33).